Consider the following 592-residue polypeptide: Keratin, type II cytoskeletal 5 (592 aa).

Residues methionine 1–serine 18 show a composition bias toward low complexity. The disordered stretch occupies residues methionine 1–alanine 20. The tract at residues methionine 1–glutamate 169 is head. Residues serine 5, serine 8, serine 16, and serine 21 each carry the phosphoserine modification. Position 24 is a phosphothreonine; by CDK1 (threonine 24). Phosphoserine is present on residues serine 26, serine 36, serine 50, serine 64, serine 71, serine 75, and serine 82. The residue at position 153 (threonine 153) is a Phosphothreonine; by CDK1. Threonine 168 carries the post-translational modification Phosphothreonine; by AURKB. A coil 1A region spans residues glutamate 170–leucine 205. Residues glutamate 170 to leucine 483 enclose the IF rod domain. The linker 1 stretch occupies residues glutamine 206–tyrosine 224. A coil 1B region spans residues isoleucine 225 to glutamine 317. The linker 12 stretch occupies residues threonine 318–isoleucine 340. Residues isoleucine 341–glutamate 479 form a coil 2 region. The interval glutamate 480 to serine 592 is tail. The disordered stretch occupies residues glycine 568 to serine 592. The span at serine 574–serine 592 shows a compositional bias: low complexity.

It belongs to the intermediate filament family. In terms of assembly, heterodimer of a type I and a type II keratin. Heterodimer with type I keratin KRT25 leading to the formation of keratin intermediate filament (KIF) network. Forms a heterodimer (via 2B domains) with KRT14 (via 2B domains). Interacts with TCHP. Interacts with EPPK1. Interacts with AMELX. Interacts with PKP1 (via N-terminus) and PKP2. Post-translationally, phosphorylated by CDK1, AURKB and Rho-kinase, phosphorylation is regulated by the cell cycle. Thr-24 phosphorylation, mediated by CDK1, peaks during prometaphase or metaphase cells with phosphorylated filamentous structures evident throughout the cytoplasm during early mitosis. CDK1 phosphorylates Thr-24 in mitotic cells at the site of injury. In terms of processing, O-glycosylated.

The protein localises to the cytoplasm. Its function is as follows. Required for the formation of keratin intermediate filaments in the basal epidermis and maintenance of the skin barrier in response to mechanical stress. Regulates the recruitment of Langerhans cells to the epidermis, potentially by modulation of the abundance of macrophage chemotactic cytokines, macrophage inflammatory cytokines and CTNND1 localization in keratinocytes. This Pan troglodytes (Chimpanzee) protein is Keratin, type II cytoskeletal 5 (KRT5).